A 259-amino-acid polypeptide reads, in one-letter code: Sorbitol-6-phosphate 2-dehydrogenase (259 aa).

Position 4 to 33 (4 to 33) interacts with NAD(+); that stretch reads VAVVIGGGQTLGAFLCHGLAAEGYRVAVVD. Ser-141 lines the substrate pocket. The active-site Proton acceptor is the Tyr-154.

It belongs to the short-chain dehydrogenases/reductases (SDR) family. Homotetramer.

It carries out the reaction D-sorbitol 6-phosphate + NAD(+) = beta-D-fructose 6-phosphate + NADH + H(+). The protein operates within carbohydrate metabolism; D-sorbitol degradation; D-fructose 6-phosphate from D-sorbitol 6-phosphate: step 1/1. This is Sorbitol-6-phosphate 2-dehydrogenase (srlD) from Escherichia coli (strain K12).